A 20-amino-acid polypeptide reads, in one-letter code: Ferric reductase A (20 aa).

In terms of assembly, monomer.

It carries out the reaction 2 a Fe(II)-siderophore + NAD(+) + H(+) = 2 a Fe(III)-siderophore + NADH. Functionally, reductase activity that acts on Fe(3+)-chelates and NADH as an electron donor and requires the presence of FMN for full activity. May play a role in iron uptake. The polypeptide is Ferric reductase A (ferA) (Paracoccus denitrificans).